The chain runs to 484 residues: Ribosome biogenesis protein NOP53 (484 aa).

Disordered stretches follow at residues Met1 to Leu51 and Glu304 to Lys356. Ala2 carries the N-acetylalanine modification. Ser29 is modified (phosphoserine). Residues Arg35–Arg49 are compositionally biased toward basic residues. Positions Lys148 to Leu437 are mediates interaction with CDKN2A/isoform tumor suppressor ARF. Phosphoserine is present on Ser305. Basic and acidic residues predominate over residues Pro336 to Arg348. Residues Arg348–Ala392 are mediates interaction with human herpesvirus 8 protein ORF16. Nucleolar localization signal stretches follow at residues Ala353 to Arg401 and Arg402 to Leu484.

This sequence belongs to the NOP53 family. Homooligomer. Interacts with PTEN; regulates PTEN phosphorylation and increases its stability. Interacts with RPL11; retains RPL11 into the nucleolus. Interacts with CDKN2A/isoform tumor suppressor ARF; the interaction is direct and promotes ARF nucleoplasmic relocalization and ubiquitin-mediated proteasomal degradation. Interacts with NPM1; the interaction is direct and competitive with MYC. Interacts with NF2 (via FERM domain); the interaction is direct. Interacts with p53/TP53 (via the oligomerization region); the interaction is direct and may prevent the MDM2-mediated proteasomal degradation of p53/TP53. Interacts with RIGI; may regulate RIGI through USP15-mediated 'Lys-63'-linked deubiquitination. Interacts with UBTF. Post-translationally, ubiquitin-mediated proteasomal degradation is regulated by c-JUN. It is associated with relocalization to the nucleoplasm and decreased homooligomerization. Phosphorylated upon DNA damage probably by ATM and DNA-PK; may regulate NOP53 degradation.

Its subcellular location is the nucleus. The protein localises to the nucleolus. It is found in the nucleoplasm. Its function is as follows. Nucleolar protein which is involved in the integration of the 5S RNP into the ribosomal large subunit during ribosome biogenesis. In ribosome biogenesis, may also play a role in rRNA transcription. Also functions as a nucleolar sensor that regulates the activation of p53/TP53 in response to ribosome biogenesis perturbation, DNA damage and other stress conditions. DNA damage or perturbation of ribosome biogenesis disrupt the interaction between NOP53 and RPL11 allowing RPL11 transport to the nucleoplasm where it can inhibit MDM2 and allow p53/TP53 activation. It may also positively regulate the function of p53/TP53 in cell cycle arrest and apoptosis through direct interaction, preventing its MDM2-dependent ubiquitin-mediated proteasomal degradation. Originally identified as a tumor suppressor, it may also play a role in cell proliferation and apoptosis by positively regulating the stability of PTEN, thereby antagonizing the PI3K-AKT/PKB signaling pathway. May also inhibit cell proliferation and increase apoptosis through its interaction with NF2. May negatively regulate NPM1 by regulating its nucleoplasmic localization, oligomerization and ubiquitin-mediated proteasomal degradation. Thereby, may prevent NPM1 interaction with MYC and negatively regulate transcription mediated by the MYC-NPM1 complex. May also regulate cellular aerobic respiration. In the cellular response to viral infection, may play a role in the attenuation of interferon-beta through the inhibition of RIGI. In Mus musculus (Mouse), this protein is Ribosome biogenesis protein NOP53.